A 319-amino-acid chain; its full sequence is Tetrahydromethanopterin S-methyltransferase subunit H (319 aa).

This sequence belongs to the MtrH family. In terms of assembly, the complex is composed of 8 subunits; MtrA, MtrB, MtrC, MtrD, MtrE, MtrF, MtrG and MtrH.

It catalyses the reaction 5-methyl-5,6,7,8-tetrahydromethanopterin + coenzyme M + 2 Na(+)(in) = 5,6,7,8-tetrahydromethanopterin + methyl-coenzyme M + 2 Na(+)(out). It functions in the pathway one-carbon metabolism; methanogenesis from CO(2); methyl-coenzyme M from 5,10-methylene-5,6,7,8-tetrahydromethanopterin: step 2/2. Functionally, part of a complex that catalyzes the formation of methyl-coenzyme M and tetrahydromethanopterin from coenzyme M and methyl-tetrahydromethanopterin. This is an energy-conserving, sodium-ion translocating step. MtrH catalyzes the transfer of the methyl group from methyl-tetrahydromethanopterin to the corrinoid prosthetic group of MtrA. The polypeptide is Tetrahydromethanopterin S-methyltransferase subunit H (Methanococcus maripaludis (strain DSM 14266 / JCM 13030 / NBRC 101832 / S2 / LL)).